The primary structure comprises 303 residues: Bifunctional protein FolD (303 aa).

Residues 169–171, threonine 196, and valine 237 each bind NADP(+); that span reads GRG.

The protein belongs to the tetrahydrofolate dehydrogenase/cyclohydrolase family. In terms of assembly, homodimer.

The catalysed reaction is (6R)-5,10-methylene-5,6,7,8-tetrahydrofolate + NADP(+) = (6R)-5,10-methenyltetrahydrofolate + NADPH. The enzyme catalyses (6R)-5,10-methenyltetrahydrofolate + H2O = (6R)-10-formyltetrahydrofolate + H(+). It participates in one-carbon metabolism; tetrahydrofolate interconversion. Catalyzes the oxidation of 5,10-methylenetetrahydrofolate to 5,10-methenyltetrahydrofolate and then the hydrolysis of 5,10-methenyltetrahydrofolate to 10-formyltetrahydrofolate. The protein is Bifunctional protein FolD of Micrococcus luteus (strain ATCC 4698 / DSM 20030 / JCM 1464 / CCM 169 / CCUG 5858 / IAM 1056 / NBRC 3333 / NCIMB 9278 / NCTC 2665 / VKM Ac-2230) (Micrococcus lysodeikticus).